The primary structure comprises 100 residues: Aspartyl/glutamyl-tRNA(Asn/Gln) amidotransferase subunit C (100 aa).

This sequence belongs to the GatC family. In terms of assembly, heterotrimer of A, B and C subunits.

It carries out the reaction L-glutamyl-tRNA(Gln) + L-glutamine + ATP + H2O = L-glutaminyl-tRNA(Gln) + L-glutamate + ADP + phosphate + H(+). The catalysed reaction is L-aspartyl-tRNA(Asn) + L-glutamine + ATP + H2O = L-asparaginyl-tRNA(Asn) + L-glutamate + ADP + phosphate + 2 H(+). Allows the formation of correctly charged Asn-tRNA(Asn) or Gln-tRNA(Gln) through the transamidation of misacylated Asp-tRNA(Asn) or Glu-tRNA(Gln) in organisms which lack either or both of asparaginyl-tRNA or glutaminyl-tRNA synthetases. The reaction takes place in the presence of glutamine and ATP through an activated phospho-Asp-tRNA(Asn) or phospho-Glu-tRNA(Gln). This Petrotoga mobilis (strain DSM 10674 / SJ95) protein is Aspartyl/glutamyl-tRNA(Asn/Gln) amidotransferase subunit C.